We begin with the raw amino-acid sequence, 300 residues long: Protoheme IX farnesyltransferase 1 (300 aa).

A run of 9 helical transmembrane segments spans residues 28–48 (VVAL…PTIL), 54–74 (VAGL…NHLI), 100–120 (ALLF…VFTN), 122–142 (LTAW…TAYL), 149–169 (NIVI…TAVT), 176–196 (ALLL…ALAI), 222–242 (CILL…LVGM), 243–263 (SGPL…YKAW), and 280–300 (FSIY…YLWA).

The protein belongs to the UbiA prenyltransferase family. Protoheme IX farnesyltransferase subfamily.

The protein resides in the cell inner membrane. It carries out the reaction heme b + (2E,6E)-farnesyl diphosphate + H2O = Fe(II)-heme o + diphosphate. The protein operates within porphyrin-containing compound metabolism; heme O biosynthesis; heme O from protoheme: step 1/1. Functionally, converts heme B (protoheme IX) to heme O by substitution of the vinyl group on carbon 2 of heme B porphyrin ring with a hydroxyethyl farnesyl side group. This is Protoheme IX farnesyltransferase 1 from Shewanella sp. (strain MR-4).